The sequence spans 419 residues: MAATATMAMPLANRLRCKPNTNSSSPSRTLFGRRVTMISSSRWGSAVSGSAIMSAAADVAAAVRREEDEEMRSYLSPEKLEVLTQMEPWVEEHVLPLLKPVEAAWQPSDLLPDPAVLGGEGFHAACAELRERAAGVPDLLLVCLVANMVTEEALPTYQSSLNRVRAVGDLTGADATAWARWIRGWSAEENRHGDVLNRYMYLSGRFDMAEVERAVHRLIRSGMAVDPPCSPYHAFVYTAFQERATAVAHGNTARLVGARGHGDAALARVCGTVAADEKRHEAAYTRIVSRLLEADPDAGVRAVARMLRRGVAMPTSPISDGRRDDLYACVVSLAEQAGTYTVSDYCSIVEHLVREWRVEELAAGLSGEGRRARDYVCELPQKIRRMKEKAHERAVKAQKKPISIPINWIFDRHVSVMLP.

Residues 1–54 (MAATATMAMPLANRLRCKPNTNSSSPSRTLFGRRVTMISSSRWGSAVSGSAIMS) constitute a chloroplast transit peptide. Positions 151, 189, 192, 242, 277, and 280 each coordinate Fe cation.

It belongs to the fatty acid desaturase type 2 family. Homodimer. Fe(2+) serves as cofactor.

It is found in the plastid. It localises to the chloroplast. Its pathway is lipid metabolism; fatty acid metabolism. Its function is as follows. Introduces a cis double bond in the acyl chain of an acyl-[acyl-carrier protein]. This chain is Acyl-[acyl-carrier-protein] desaturase 6, chloroplastic, found in Oryza sativa subsp. japonica (Rice).